The chain runs to 2019 residues: Sodium channel protein type 5 subunit alpha (2019 aa).

Over methionine 1–valine 129 the chain is Cytoplasmic. Residues arginine 27–aspartate 66 are disordered. Serine 36 carries the phosphoserine modification. The residue at position 38 (threonine 38) is a Phosphothreonine. Positions glutamate 41 to proline 52 are enriched in basic and acidic residues. The I repeat unit spans residues valine 113 to asparagine 420. A helical transmembrane segment spans residues histidine 130 to alanine 149. The Extracellular segment spans residues glutamine 150–threonine 157. Residues lysine 158–arginine 179 traverse the membrane as a helical segment. The Cytoplasmic portion of the chain corresponds to glycine 180–phenylalanine 188. A helical transmembrane segment spans residues leucine 189–phenylalanine 209. Residues valine 210–serine 216 are Extracellular-facing. Residue asparagine 214 is glycosylated (N-linked (GlcNAc...) asparagine). A helical membrane pass occupies residues alanine 217–leucine 236. Topologically, residues lysine 237–lysine 249 are cytoplasmic. A helical membrane pass occupies residues leucine 250–phenylalanine 272. Residues methionine 273–serine 357 lie on the Extracellular side of the membrane. Cysteine 280 and cysteine 335 are joined by a disulfide. Asparagine 283, asparagine 288, asparagine 291, asparagine 318, and asparagine 328 each carry an N-linked (GlcNAc...) asparagine glycan. The pore-forming intramembrane region spans phenylalanine 358–tyrosine 378. At glutamine 379 to glycine 386 the chain is on the extracellular side. The chain crosses the membrane as a helical span at residues lysine 387–alanine 413. The Cytoplasmic segment spans residues methionine 414–alanine 719. Phosphoserine occurs at positions 457, 460, 483, and 484. Disordered stretches follow at residues leucine 461–glutamine 575 and glutamate 610–alanine 647. Position 486 is a phosphothreonine (threonine 486). The segment covering aspartate 491 to proline 503 has biased composition (basic and acidic residues). Serine 497 and serine 510 each carry phosphoserine. Positions asparagine 507 to serine 528 are enriched in polar residues. The residue at position 526 (arginine 526) is a Dimethylated arginine; alternate. At arginine 526 the chain carries Omega-N-methylarginine; alternate. Serine 539 and serine 571 each carry phosphoserine. Residues serine 664 and serine 667 each carry the phosphoserine modification. One copy of the II repeat lies at cysteine 699–glycine 971. The helical transmembrane segment at aspartate 720–glutamate 737 threads the bilayer. The Extracellular segment spans residues histidine 738–glutamate 746. N-linked (GlcNAc...) asparagine glycosylation occurs at asparagine 740. The chain crosses the membrane as a helical span at residues glutamate 747–isoleucine 769. At alanine 770–tyrosine 775 the chain is on the cytoplasmic side. The helical transmembrane segment at tyrosine 776 to leucine 796 threads the bilayer. At glycine 797–valine 806 the chain is on the extracellular side. A glycan (N-linked (GlcNAc...) asparagine) is linked at asparagine 803. Residues leucine 807–serine 821 form a helical membrane-spanning segment. Residues tryptophan 822 to alanine 838 are Cytoplasmic-facing. Residues leucine 839–leucine 860 form a helical membrane-spanning segment. Over phenylalanine 861–phenylalanine 886 the chain is Extracellular. Residue asparagine 864 is glycosylated (N-linked (GlcNAc...) asparagine). An intramembrane region (pore-forming) is located at residues phenylalanine 887–methionine 905. Topologically, residues tryptophan 906–glutamine 914 are extracellular. An intrachain disulfide couples cysteine 908 to cysteine 917. The chain crosses the membrane as a helical span at residues serine 915–serine 943. Residues phenylalanine 944–glutamate 1205 are Cytoplasmic-facing. Residues histidine 1000–alanine 1144 are disordered. The span at glutamate 1017–proline 1036 shows a compositional bias: basic and acidic residues. Positions serine 1056 to glutamate 1075 are enriched in acidic residues. Over residues serine 1098 to alanine 1115 the composition is skewed to low complexity. The stretch at proline 1189–leucine 1503 is one III repeat. A helical transmembrane segment spans residues histidine 1206–glutamate 1227. Residues aspartate 1228 to lysine 1238 lie on the Extracellular side of the membrane. The chain crosses the membrane as a helical span at residues valine 1239–valine 1261. Residues alanine 1262 to threonine 1270 lie on the Cytoplasmic side of the membrane. The chain crosses the membrane as a helical span at residues asparagine 1271–leucine 1293. The Extracellular portion of the chain corresponds to glycine 1294 to glycine 1299. The helical transmembrane segment at proline 1300–phenylalanine 1319 threads the bilayer. Residues glutamate 1320–alanine 1332 are Cytoplasmic-facing. A helical transmembrane segment spans residues isoleucine 1333 to leucine 1357. Over phenylalanine 1358 to valine 1402 the chain is Extracellular. 4 N-linked (GlcNAc...) asparagine glycosylation sites follow: asparagine 1367, asparagine 1376, asparagine 1382, and asparagine 1390. An intramembrane region (pore-forming) is located at residues asparagine 1403–methionine 1424. At aspartate 1425–tyrosine 1447 the chain is on the extracellular side. Residues methionine 1448–isoleucine 1472 traverse the membrane as a helical segment. The Cytoplasmic portion of the chain corresponds to aspartate 1473–glutamine 1530. Serine 1505 carries the phosphoserine; by PKC modification. An IV repeat occupies isoleucine 1512–glutamine 1809. Residues alanine 1531 to valine 1549 traverse the membrane as a helical segment. The Extracellular portion of the chain corresponds to glutamate 1550 to asparagine 1560. Residues isoleucine 1561–alanine 1582 traverse the membrane as a helical segment. The Cytoplasmic portion of the chain corresponds to alanine 1583–asparagine 1591. A helical membrane pass occupies residues serine 1592–isoleucine 1614. Over glutamine 1615 to proline 1621 the chain is Extracellular. The helical transmembrane segment at threonine 1622–alanine 1642 threads the bilayer. Topologically, residues lysine 1643–leucine 1652 are cytoplasmic. The chain crosses the membrane as a helical span at residues methionine 1653–phenylalanine 1681. Residues alanine 1682–phenylalanine 1699 are Extracellular-facing. Residues alanine 1700–aspartate 1716 constitute an intramembrane region (pore-forming). Over glycine 1717 to proline 1747 the chain is Extracellular. Residues alanine 1748 to isoleucine 1773 traverse the membrane as a helical segment. The Cytoplasmic segment spans residues leucine 1774–valine 2019. The segment at aspartate 1841–glutamate 1903 is interaction with FGF13. The 30-residue stretch at glutamate 1903–glutamine 1932 folds into the IQ domain. A compositionally biased stretch (low complexity) spans serine 1963–serine 1982. A disordered region spans residues serine 1963–valine 2019. The interaction with NEDD4, NEDD4L and WWP2 stretch occupies residues proline 1977 to tyrosine 1980.

Belongs to the sodium channel (TC 1.A.1.10) family. Nav1.5/SCN5A subfamily. As to quaternary structure, cannot form the same regulatory interactions with beta subunits as other Navs do. Interacts with the PDZ domain of the syntrophin SNTA1, SNTB1 and SNTB2. Interacts with NEDD4, NEDD4L, WWP2 and GPD1L. Interacts with CALM. Interacts with FGF13; the interaction is direct and may regulate SNC5A density at membranes and function. Interacts with FGF12 and FGF14. Interacts with ANK3. Interacts with PKP2 (via N-terminus). Interacts with TMEM233. Interacts with XIRP2; the interaction is required for normal action potential configuration in the heart. Post-translationally, phosphorylation at Ser-1505 by PKC in a highly conserved cytoplasmic loop slows inactivation of the sodium channel and reduces peak sodium currents. Regulated through phosphorylation by CaMK2D. Ubiquitinated by NEDD4L; which promotes its endocytosis. Does not seem to be ubiquitinated by NEDD4 or WWP2. In terms of processing, lacks the cysteine which covalently binds the conotoxin GVIIJ. This cysteine (position 868) is speculated in other sodium channel subunits alpha to be implied in covalent binding with the sodium channel subunit beta-2 or beta-4. Post-translationally, N-glycosylated at Asn-318, probably hinders potential interaction with regulatory subunits. In terms of tissue distribution, expressed in the myocardium (at protein level).

It localises to the cell membrane. It is found in the cytoplasm. The protein resides in the perinuclear region. The protein localises to the sarcolemma. Its subcellular location is the T-tubule. It localises to the cell junction. It carries out the reaction Na(+)(in) = Na(+)(out). With respect to regulation, channel inactivation is regulated by intracellular calcium levels. It is a tetrodotoxin-resistant voltage-gated Na(+) channel (Nav). In terms of biological role, pore-forming subunit of Nav1.5, a voltage-gated sodium (Nav) channel that directly mediates the depolarizing phase of action potentials in excitable membranes. Navs, also called VGSCs (voltage-gated sodium channels) or VDSCs (voltage-dependent sodium channels), operate by switching between closed and open conformations depending on the voltage difference across the membrane. In the open conformation they allow Na(+) ions to selectively pass through the pore, along their electrochemical gradient. The influx of Na(+) ions provokes membrane depolarization, initiating the propagation of electrical signals throughout cells and tissues. Nav1.5 is the predominant sodium channel expressed in myocardial cells and it is responsible for the initial upstroke of the action potential in cardiac myocytes, thereby initiating the heartbeat. Required for normal electrical conduction including formation of the infranodal ventricular conduction system and normal action potential configuration, as a result of its interaction with XIRP2. The polypeptide is Sodium channel protein type 5 subunit alpha (Mus musculus (Mouse)).